Here is a 475-residue protein sequence, read N- to C-terminus: UDP-N-acetylmuramate--L-alanine ligase (475 aa).

112-118 serves as a coordination point for ATP; sequence GTHGKTT.

Belongs to the MurCDEF family.

Its subcellular location is the cytoplasm. It carries out the reaction UDP-N-acetyl-alpha-D-muramate + L-alanine + ATP = UDP-N-acetyl-alpha-D-muramoyl-L-alanine + ADP + phosphate + H(+). It functions in the pathway cell wall biogenesis; peptidoglycan biosynthesis. Its function is as follows. Cell wall formation. The polypeptide is UDP-N-acetylmuramate--L-alanine ligase (Methylobacillus flagellatus (strain ATCC 51484 / DSM 6875 / VKM B-1610 / KT)).